The following is a 355-amino-acid chain: Cell surface glycoprotein CD200 receptor 1 (355 aa).

The N-terminal stretch at 1 to 26 (MPCTWITSDLQLRLILTLFFVAECLS) is a signal peptide. The Extracellular segment spans residues 27–267 (AGMEGTKTSN…QGAEIPAHLK (241 aa)). Residues 35-55 (SNNSMQQLDNGNHSSVSTTSS) show a composition bias toward polar residues. Positions 35–56 (SNNSMQQLDNGNHSSVSTTSST) are disordered. 3 N-linked (GlcNAc...) asparagine glycosylation sites follow: Asn-46, Asn-123, and Asn-153. Disulfide bonds link Cys-85-Cys-156, Cys-108-Cys-124, Cys-191-Cys-241, and Cys-210-Cys-229. Positions 139 to 257 (PALQVDPVAI…GNKSLSIQLS (119 aa)) constitute an Ig-like C2-type domain. A helical transmembrane segment spans residues 268 to 288 (NLYITAPIFIILIVVGSIWLL). Residues 289-355 (KISGCRKCKL…NLHTIYVPRV (67 aa)) lie on the Cytoplasmic side of the membrane.

It belongs to the CD200R family. CD200 and CD200R1 interact via their respective N-terminal Ig-like domains.

The protein resides in the cell membrane. Its function is as follows. Inhibitory receptor for the CD200/OX2 cell surface glycoprotein. Limits inflammation by inhibiting the expression of pro-inflammatory molecules including TNF-alpha, interferons, and inducible nitric oxide synthase (iNOS) in response to selected stimuli. This Bos taurus (Bovine) protein is Cell surface glycoprotein CD200 receptor 1 (CD200R1).